The following is a 359-amino-acid chain: Fructose-bisphosphate aldolase class 2 (359 aa).

Ser-61 provides a ligand contact to D-glyceraldehyde 3-phosphate. The active-site Proton donor is the Asp-110. Residues His-111, Asp-145, Glu-175, and His-227 each contribute to the Zn(2+) site. Gly-228 lines the dihydroxyacetone phosphate pocket. A Zn(2+)-binding site is contributed by His-265. Dihydroxyacetone phosphate is bound by residues 266–268 (GGS) and 287–290 (NIDT).

Belongs to the class II fructose-bisphosphate aldolase family. Zn(2+) is required as a cofactor.

The enzyme catalyses beta-D-fructose 1,6-bisphosphate = D-glyceraldehyde 3-phosphate + dihydroxyacetone phosphate. The protein operates within carbohydrate degradation; glycolysis; D-glyceraldehyde 3-phosphate and glycerone phosphate from D-glucose: step 4/4. Catalyzes the aldol condensation of dihydroxyacetone phosphate (DHAP or glycerone-phosphate) with glyceraldehyde 3-phosphate (G3P) to form fructose 1,6-bisphosphate (FBP) in gluconeogenesis and the reverse reaction in glycolysis. The polypeptide is Fructose-bisphosphate aldolase class 2 (fbaA) (Buchnera aphidicola subsp. Schizaphis graminum (strain Sg)).